Reading from the N-terminus, the 193-residue chain is UPF0301 protein SAV_5129 (193 aa).

It belongs to the UPF0301 (AlgH) family.

The chain is UPF0301 protein SAV_5129 from Streptomyces avermitilis (strain ATCC 31267 / DSM 46492 / JCM 5070 / NBRC 14893 / NCIMB 12804 / NRRL 8165 / MA-4680).